Reading from the N-terminus, the 141-residue chain is Ribosome-binding factor A (141 aa).

Belongs to the RbfA family. As to quaternary structure, monomer. Binds 30S ribosomal subunits, but not 50S ribosomal subunits or 70S ribosomes.

It localises to the cytoplasm. Functionally, one of several proteins that assist in the late maturation steps of the functional core of the 30S ribosomal subunit. Associates with free 30S ribosomal subunits (but not with 30S subunits that are part of 70S ribosomes or polysomes). Required for efficient processing of 16S rRNA. May interact with the 5'-terminal helix region of 16S rRNA. The polypeptide is Ribosome-binding factor A (Maricaulis maris (strain MCS10) (Caulobacter maris)).